Reading from the N-terminus, the 42-residue chain is uncharacterized protein (42 aa).

This is an uncharacterized protein from Saccharomyces cerevisiae (strain ATCC 204508 / S288c) (Baker's yeast).